We begin with the raw amino-acid sequence, 369 residues long: Histidinol-phosphate aminotransferase 2 (369 aa).

Position 231 is an N6-(pyridoxal phosphate)lysine (Lys231).

This sequence belongs to the class-II pyridoxal-phosphate-dependent aminotransferase family. Histidinol-phosphate aminotransferase subfamily. In terms of assembly, homodimer. Pyridoxal 5'-phosphate serves as cofactor.

The catalysed reaction is L-histidinol phosphate + 2-oxoglutarate = 3-(imidazol-4-yl)-2-oxopropyl phosphate + L-glutamate. It functions in the pathway amino-acid biosynthesis; L-histidine biosynthesis; L-histidine from 5-phospho-alpha-D-ribose 1-diphosphate: step 7/9. The protein is Histidinol-phosphate aminotransferase 2 of Legionella pneumophila subsp. pneumophila (strain Philadelphia 1 / ATCC 33152 / DSM 7513).